A 90-amino-acid chain; its full sequence is Barrier-to-autointegration factor B (90 aa).

Belongs to the BAF family. In terms of assembly, homodimer. Interacts with nemp1a and nemp1b.

It is found in the nucleus. It localises to the chromosome. The protein localises to the nucleus envelope. The protein resides in the cytoplasm. Its function is as follows. Non-specific DNA-binding protein that plays key roles in mitotic nuclear reassembly, chromatin organization, DNA damage response, gene expression and intrinsic immunity against foreign DNA. Contains two non-specific double-stranded DNA (dsDNA)-binding sites which promote DNA cross-bridging. Plays a key role in nuclear membrane reformation at the end of mitosis by driving formation of a single nucleus in a spindle-independent manner. Transiently cross-bridges anaphase chromosomes via its ability to bridge distant DNA sites, leading to the formation of a dense chromatin network at the chromosome ensemble surface that limits membranes to the surface. Also acts as a negative regulator of innate immune activation by restricting CGAS activity toward self-DNA upon acute loss of nuclear membrane integrity. Outcompetes CGAS for DNA-binding, thereby preventing CGAS activation and subsequent damaging autoinflammatory responses. Also involved in DNA damage response; acts by inhibiting the ADP-ribosyltransferase activity of PARP1. Involved in the recognition of exogenous dsDNA in the cytosol: associates with exogenous dsDNA immediately after its appearance in the cytosol at endosome breakdown and is required to avoid autophagy. This is Barrier-to-autointegration factor B (banf1-b) from Xenopus laevis (African clawed frog).